The primary structure comprises 254 residues: Triosephosphate isomerase (254 aa).

9–11 is a binding site for substrate; the sequence is NWK. Histidine 96 serves as the catalytic Electrophile. The active-site Proton acceptor is glutamate 169. Substrate contacts are provided by residues glycine 175, serine 215, and 236–237; that span reads GG.

The protein belongs to the triosephosphate isomerase family. Homodimer.

The protein localises to the cytoplasm. It carries out the reaction D-glyceraldehyde 3-phosphate = dihydroxyacetone phosphate. It functions in the pathway carbohydrate biosynthesis; gluconeogenesis. Its pathway is carbohydrate degradation; glycolysis; D-glyceraldehyde 3-phosphate from glycerone phosphate: step 1/1. In terms of biological role, involved in the gluconeogenesis. Catalyzes stereospecifically the conversion of dihydroxyacetone phosphate (DHAP) to D-glyceraldehyde-3-phosphate (G3P). The protein is Triosephosphate isomerase of Borrelia duttonii (strain Ly).